An 857-amino-acid polypeptide reads, in one-letter code: Protein STICHEL-like 2 (857 aa).

280 to 287 is an ATP binding site; that stretch reads GPRGTGKT. Residues C299, C309, C312, and C315 each coordinate Zn(2+). Residues 544–576 adopt a coiled-coil conformation; it reads LTRHTSEEEMQKLRNALKILSDAEKHLRASKNQ. Disordered regions lie at residues 593-629 and 787-845; these read SSFA…DAEK and ASSR…SSRL. Residues 599-610 show a composition bias toward basic and acidic residues; the sequence is ENGRNQINKDVE. Residues 834–843 are compositionally biased toward polar residues; that stretch reads QSETQNSKSS.

It belongs to the DnaX/STICHEL family.

This chain is Protein STICHEL-like 2, found in Arabidopsis thaliana (Mouse-ear cress).